Consider the following 164-residue polypeptide: Large ribosomal subunit protein uL10 (164 aa).

This sequence belongs to the universal ribosomal protein uL10 family. Part of the ribosomal stalk of the 50S ribosomal subunit. The N-terminus interacts with L11 and the large rRNA to form the base of the stalk. The C-terminus forms an elongated spine to which L12 dimers bind in a sequential fashion forming a multimeric L10(L12)X complex.

Functionally, forms part of the ribosomal stalk, playing a central role in the interaction of the ribosome with GTP-bound translation factors. The protein is Large ribosomal subunit protein uL10 of Aliivibrio fischeri (strain MJ11) (Vibrio fischeri).